A 198-amino-acid polypeptide reads, in one-letter code: Small ribosomal subunit protein uS5 (198 aa).

Residues 46 to 109 (LEDDVLEISM…NNAKLNIFKV (64 aa)) form the S5 DRBM domain.

It belongs to the universal ribosomal protein uS5 family. As to quaternary structure, part of the 30S ribosomal subunit. Contacts protein S4.

Functionally, with S4 and S12 plays an important role in translational accuracy. The polypeptide is Small ribosomal subunit protein uS5 (Archaeoglobus fulgidus (strain ATCC 49558 / DSM 4304 / JCM 9628 / NBRC 100126 / VC-16)).